A 755-amino-acid chain; its full sequence is Polyribonucleotide nucleotidyltransferase (755 aa).

Asp493 and Asp499 together coordinate Mg(2+). The KH domain maps to Pro560 to Ile619. Residues Gly629–Arg698 form the S1 motif domain. The segment at Glu704–Asp755 is disordered. Over residues Arg719–Asp755 the composition is skewed to basic and acidic residues.

Belongs to the polyribonucleotide nucleotidyltransferase family. Requires Mg(2+) as cofactor.

Its subcellular location is the cytoplasm. The catalysed reaction is RNA(n+1) + phosphate = RNA(n) + a ribonucleoside 5'-diphosphate. In terms of biological role, involved in mRNA degradation. Catalyzes the phosphorolysis of single-stranded polyribonucleotides processively in the 3'- to 5'-direction. The protein is Polyribonucleotide nucleotidyltransferase of Chloroflexus aggregans (strain MD-66 / DSM 9485).